A 253-amino-acid chain; its full sequence is BRI3-binding protein (253 aa).

4 consecutive transmembrane segments (helical) span residues 19–39 (VLLPVLLLALLLLALVAPGAQ), 131–151 (ALVLVGVVLLAYWFLSLTLGF), 164–181 (FWLVRVILFSMSCVYILH), and 190–210 (AVLPLCVVVAIYFMTGPMGYW). Positions 219-253 (SPSVEEKLEHLENQVRLLNIRLNRVLENLDRSKDK) form a coiled coil. Residue Ser250 is modified to Phosphoserine.

As to quaternary structure, interacts with LETMD1. Interacts with BRI3. Interacts with BRI3; the interaction is weak. Interacts with TMEM238L.

Its subcellular location is the mitochondrion outer membrane. Its function is as follows. Involved in tumorigenesis and may function by stabilizing p53/TP53. This Mus musculus (Mouse) protein is BRI3-binding protein.